Reading from the N-terminus, the 309-residue chain is MDLIILVGIAVALLVVIVTLYLLQKKNAAPETKVAAAPQRGVPQRAQEGVPRRAQIARNQRNRLRQNVPAAPVAAAAGALPAAGDSDHEDEGQVDGDEARVPQGAVLDEKMGAKKRAKMEAKEQKRLQREQELHDREQRKVKEAKEEAERKQQEDLEAEAERKRVDAERLAKEERERKEHEEYLKMKAAFSVEEEGFEEGDADDQDNLLADFIQYIRDNKVVVLEDLAVAFKLKTQQVIDRIQNLQADGTLTGVIDDRGKFIYVSEKELLAVAKFIKQRGRVSIAELAESSNNLINLTPISAGGGEASS.

At 1–2 (MD) the chain is on the lumenal side. Residues 3-23 (LIILVGIAVALLVVIVTLYLL) form a helical membrane-spanning segment. Topologically, residues 24–309 (QKKNAAPETK…ISAGGGEASS (286 aa)) are cytoplasmic. Disordered regions lie at residues 32–53 (TKVA…VPRR) and 79–175 (ALPA…KEER). Residues 87 to 96 (DHEDEGQVDG) show a composition bias toward acidic residues. Residues 107–175 (LDEKMGAKKR…DAERLAKEER (69 aa)) show a composition bias toward basic and acidic residues. A coiled-coil region spans residues 120 to 177 (EAKEQKRLQREQELHDREQRKVKEAKEEAERKQQEDLEAEAERKRVDAERLAKEERER).

Belongs to the DDRGK1 family. In terms of assembly, interacts with Atg9; the interaction is transient.

The protein resides in the endoplasmic reticulum membrane. In terms of biological role, substrate adapter for ufmylation, the covalent attachment of the ubiquitin-like modifier UFM1 to substrate proteins. Required for ufmylation of Atg9; protects the nervous system during aging, possibly by stabilizing Atg9 and supporting its function. The polypeptide is DDRGK domain-containing protein 1 (Drosophila melanogaster (Fruit fly)).